The sequence spans 258 residues: Imidazole glycerol phosphate synthase subunit HisF (258 aa).

Active-site residues include D11 and D130.

Belongs to the HisA/HisF family. Heterodimer of HisH and HisF.

Its subcellular location is the cytoplasm. It carries out the reaction 5-[(5-phospho-1-deoxy-D-ribulos-1-ylimino)methylamino]-1-(5-phospho-beta-D-ribosyl)imidazole-4-carboxamide + L-glutamine = D-erythro-1-(imidazol-4-yl)glycerol 3-phosphate + 5-amino-1-(5-phospho-beta-D-ribosyl)imidazole-4-carboxamide + L-glutamate + H(+). Its pathway is amino-acid biosynthesis; L-histidine biosynthesis; L-histidine from 5-phospho-alpha-D-ribose 1-diphosphate: step 5/9. Its function is as follows. IGPS catalyzes the conversion of PRFAR and glutamine to IGP, AICAR and glutamate. The HisF subunit catalyzes the cyclization activity that produces IGP and AICAR from PRFAR using the ammonia provided by the HisH subunit. The protein is Imidazole glycerol phosphate synthase subunit HisF of Sodalis glossinidius (strain morsitans).